The following is a 261-amino-acid chain: Mite allergen Eur m 3 (261 aa).

The N-terminal stretch at 1 to 18 is a signal peptide; sequence MVICNAIIVLLLAFNTLA. The propeptide occupies 19–29; that stretch reads NPILPSSPNAT. One can recognise a Peptidase S1 domain in the interval 30-260; that stretch reads IVGGQKAKAG…FIDWIDSKRS (231 aa). C54 and C70 form a disulfide bridge. Active-site charge relay system residues include H69 and D114. Disulfide bonds link C181–C198 and C210–C236. The active-site Charge relay system is the S214.

This sequence belongs to the peptidase S1 family.

Its subcellular location is the secreted. The sequence is that of Mite allergen Eur m 3 (EURM3) from Euroglyphus maynei (Mayne's house dust mite).